The following is a 665-amino-acid chain: Probable arginine--tRNA ligase, cytoplasmic (665 aa).

L-arginine contacts are provided by residues Ser204–Asn206, His215, Tyr390, Asp394, and Gln418. The 'HIGH' region motif lies at Pro205–Leu216. The segment at Asn535–Ser549 is interaction with tRNA.

This sequence belongs to the class-I aminoacyl-tRNA synthetase family.

It localises to the cytoplasm. Its subcellular location is the cytosol. The catalysed reaction is tRNA(Arg) + L-arginine + ATP = L-arginyl-tRNA(Arg) + AMP + diphosphate. Functionally, forms part of a macromolecular complex that catalyzes the attachment of specific amino acids to cognate tRNAs during protein synthesis. This Drosophila melanogaster (Fruit fly) protein is Probable arginine--tRNA ligase, cytoplasmic.